The sequence spans 288 residues: Solute carrier family 25 member 47-B (288 aa).

Solcar repeat units follow at residues 1–83 (MHLA…ILQF), 99–191 (AHIF…ICEI), and 199–286 (PGWP…VVRL). 6 consecutive transmembrane segments (helical) span residues 3-23 (LADFLAGSVGGAFGVAVGYPL), 58-75 (GMSMPISTVSISSSLVFG), 101-121 (IFLAGFTGGVTQVLVMAPADI), 175-195 (GPSFATYFLTYNTICEILTTE), 199-219 (PGWPVVLLAGGVSGMCGWAVG), and 257-277 (VLFRGLTVNCIRAFPVNMSVF).

The protein belongs to the mitochondrial carrier (TC 2.A.29) family.

It is found in the mitochondrion inner membrane. The chain is Solute carrier family 25 member 47-B (slc25a47b) from Danio rerio (Zebrafish).